Reading from the N-terminus, the 133-residue chain is Ribosome-binding factor A (133 aa).

It belongs to the RbfA family. As to quaternary structure, monomer. Binds 30S ribosomal subunits, but not 50S ribosomal subunits or 70S ribosomes.

Its subcellular location is the cytoplasm. Its function is as follows. One of several proteins that assist in the late maturation steps of the functional core of the 30S ribosomal subunit. Associates with free 30S ribosomal subunits (but not with 30S subunits that are part of 70S ribosomes or polysomes). Required for efficient processing of 16S rRNA. May interact with the 5'-terminal helix region of 16S rRNA. This chain is Ribosome-binding factor A, found in Chlamydia muridarum (strain MoPn / Nigg).